We begin with the raw amino-acid sequence, 198 residues long: Holliday junction branch migration complex subunit RuvA (198 aa).

Residues 1–63 are domain I; the sequence is MYDYIKGQLT…EDAHLLFGFH (63 aa). Positions 64 to 142 are domain II; it reads TKDEKDVFLK…EAPQETGNTK (79 aa). Residues 143 to 147 form a flexible linker region; that stretch reads ARSNK. Residues 148-198 are domain III; the sequence is AGNTQLDEAIEALLALGYKATELKKIRAFFEGTSETAEQYIKSALKLLMKG.

It belongs to the RuvA family. Homotetramer. Forms an RuvA(8)-RuvB(12)-Holliday junction (HJ) complex. HJ DNA is sandwiched between 2 RuvA tetramers; dsDNA enters through RuvA and exits via RuvB. An RuvB hexamer assembles on each DNA strand where it exits the tetramer. Each RuvB hexamer is contacted by two RuvA subunits (via domain III) on 2 adjacent RuvB subunits; this complex drives branch migration. In the full resolvosome a probable DNA-RuvA(4)-RuvB(12)-RuvC(2) complex forms which resolves the HJ.

It localises to the cytoplasm. Functionally, the RuvA-RuvB-RuvC complex processes Holliday junction (HJ) DNA during genetic recombination and DNA repair, while the RuvA-RuvB complex plays an important role in the rescue of blocked DNA replication forks via replication fork reversal (RFR). RuvA specifically binds to HJ cruciform DNA, conferring on it an open structure. The RuvB hexamer acts as an ATP-dependent pump, pulling dsDNA into and through the RuvAB complex. HJ branch migration allows RuvC to scan DNA until it finds its consensus sequence, where it cleaves and resolves the cruciform DNA. This chain is Holliday junction branch migration complex subunit RuvA, found in Streptococcus pyogenes serotype M18 (strain MGAS8232).